Here is a 458-residue protein sequence, read N- to C-terminus: GTPase Der (458 aa).

2 consecutive EngA-type G domains span residues 4-169 and 178-353; these read PSIA…PKDL and IMMS…TQHR. Residues 10-17, 57-61, 120-123, 184-191, 231-235, and 296-299 each bind GTP; these read GRPNVGKS, DTGGL, NKCE, DTAGI, and NKWD. The KH-like domain maps to 354–439; it reads RRVTTSVVNE…PIILLWRGKQ (86 aa).

It belongs to the TRAFAC class TrmE-Era-EngA-EngB-Septin-like GTPase superfamily. EngA (Der) GTPase family. As to quaternary structure, associates with the 50S ribosomal subunit.

Its function is as follows. GTPase that plays an essential role in the late steps of ribosome biogenesis. In Prochlorococcus marinus subsp. pastoris (strain CCMP1986 / NIES-2087 / MED4), this protein is GTPase Der.